Here is a 108-residue protein sequence, read N- to C-terminus: PTS system fructose-like EIIB component 1 (108 aa).

The region spanning 1 to 101 is the PTS EIIB type-2 domain; sequence MSKKLIALCA…AAGIIKEIEE (101 aa). Cys11 functions as the Phosphocysteine intermediate in the catalytic mechanism. Position 11 is a phosphocysteine; by EIIA (Cys11).

It localises to the cytoplasm. The catalysed reaction is D-fructose(out) + N(pros)-phospho-L-histidyl-[protein] = D-fructose 1-phosphate(in) + L-histidyl-[protein]. In terms of biological role, the phosphoenolpyruvate-dependent sugar phosphotransferase system (sugar PTS), a major carbohydrate active transport system, catalyzes the phosphorylation of incoming sugar substrates concomitantly with their translocation across the cell membrane. The enzyme II FryABC PTS system is involved in fructose transport. In Shigella flexneri, this protein is PTS system fructose-like EIIB component 1 (fryB).